The primary structure comprises 192 residues: Peptidyl-tRNA hydrolase (192 aa).

Tyr17 is a tRNA binding site. His22 acts as the Proton acceptor in catalysis. TRNA is bound by residues Phe68, Asn70, and Asn116.

Belongs to the PTH family. As to quaternary structure, monomer.

The protein resides in the cytoplasm. The enzyme catalyses an N-acyl-L-alpha-aminoacyl-tRNA + H2O = an N-acyl-L-amino acid + a tRNA + H(+). Hydrolyzes ribosome-free peptidyl-tRNAs (with 1 or more amino acids incorporated), which drop off the ribosome during protein synthesis, or as a result of ribosome stalling. Functionally, catalyzes the release of premature peptidyl moieties from peptidyl-tRNA molecules trapped in stalled 50S ribosomal subunits, and thus maintains levels of free tRNAs and 50S ribosomes. This Xylella fastidiosa (strain Temecula1 / ATCC 700964) protein is Peptidyl-tRNA hydrolase.